A 516-amino-acid polypeptide reads, in one-letter code: GMP synthase [glutamine-hydrolyzing] (516 aa).

In terms of domain architecture, Glutamine amidotransferase type-1 spans 7 to 199; sequence KIIILDFGSQ…VFGLCKCQAT (193 aa). The Nucleophile role is filled by C84. Catalysis depends on residues H173 and E175. A GMPS ATP-PPase domain is found at 200–391; that stretch reads WTMQGFIESN…LGLPDEAVHR (192 aa). 227–233 contacts ATP; sequence SGGVDSS.

Homodimer.

The catalysed reaction is XMP + L-glutamine + ATP + H2O = GMP + L-glutamate + AMP + diphosphate + 2 H(+). It functions in the pathway purine metabolism; GMP biosynthesis; GMP from XMP (L-Gln route): step 1/1. Functionally, catalyzes the synthesis of GMP from XMP. In Desulfotalea psychrophila (strain LSv54 / DSM 12343), this protein is GMP synthase [glutamine-hydrolyzing].